The chain runs to 575 residues: DNA-directed RNA polymerase subunit beta' (575 aa).

Residues Cys-64, Cys-66, Cys-85, and Cys-88 each contribute to the Zn(2+) site. Asp-440, Asp-442, and Asp-444 together coordinate Mg(2+).

Belongs to the RNA polymerase beta' chain family. RpoC1 subfamily. In terms of assembly, in plastids the minimal PEP RNA polymerase catalytic core is composed of four subunits: alpha, beta, beta', and beta''. When a (nuclear-encoded) sigma factor is associated with the core the holoenzyme is formed, which can initiate transcription. Requires Mg(2+) as cofactor. Zn(2+) is required as a cofactor.

It localises to the plastid. It catalyses the reaction RNA(n) + a ribonucleoside 5'-triphosphate = RNA(n+1) + diphosphate. DNA-dependent RNA polymerase catalyzes the transcription of DNA into RNA using the four ribonucleoside triphosphates as substrates. The protein is DNA-directed RNA polymerase subunit beta' of Euglena longa (Euglenophycean alga).